A 188-amino-acid chain; its full sequence is Sulfopyruvate decarboxylase subunit beta (188 aa).

It belongs to the TPP enzyme family. In terms of assembly, heterododecamer composed of 6 subunits alpha and 6 subunits beta. Thiamine diphosphate is required as a cofactor.

The enzyme catalyses 3-sulfopyruvate + H(+) = sulfoacetaldehyde + CO2. It functions in the pathway cofactor biosynthesis; coenzyme M biosynthesis; sulfoacetaldehyde from phosphoenolpyruvate and sulfite: step 4/4. With respect to regulation, inhibited by oxygen when heated in air at 80 degrees Celsius. The enzyme is reactivated by addition of dithionite. Its function is as follows. Involved in the biosynthesis of the coenzyme M (2-mercaptoethanesulfonic acid). Catalyzes the decarboxylation of sulfopyruvate to sulfoacetaldehyde. The protein is Sulfopyruvate decarboxylase subunit beta of Methanocaldococcus jannaschii (strain ATCC 43067 / DSM 2661 / JAL-1 / JCM 10045 / NBRC 100440) (Methanococcus jannaschii).